We begin with the raw amino-acid sequence, 227 residues long: Ribonuclease 3 (227 aa).

An RNase III domain is found at 4–133; sequence FETLEKLLSY…LIAAIYLDSN (130 aa). Residue Glu-46 participates in Mg(2+) binding. Residue Asp-50 is part of the active site. Mg(2+) is bound by residues Asn-119 and Glu-122. Glu-122 is a catalytic residue. Positions 158 to 226 constitute a DRBM domain; sequence DPKTALQEWA…ARSLLHRLKN (69 aa).

The protein belongs to the ribonuclease III family. In terms of assembly, homodimer. Mg(2+) serves as cofactor.

It is found in the cytoplasm. The enzyme catalyses Endonucleolytic cleavage to 5'-phosphomonoester.. In terms of biological role, digests double-stranded RNA. Involved in the processing of primary rRNA transcript to yield the immediate precursors to the large and small rRNAs (23S and 16S). Processes some mRNAs, and tRNAs when they are encoded in the rRNA operon. Processes pre-crRNA and tracrRNA of type II CRISPR loci if present in the organism. This Rickettsia massiliae (strain Mtu5) protein is Ribonuclease 3.